The primary structure comprises 304 residues: Ribosomal protein L11 methyltransferase (304 aa).

S-adenosyl-L-methionine is bound by residues Thr-152, Gly-173, Asp-195, and Asn-234.

Belongs to the methyltransferase superfamily. PrmA family.

The protein resides in the cytoplasm. It catalyses the reaction L-lysyl-[protein] + 3 S-adenosyl-L-methionine = N(6),N(6),N(6)-trimethyl-L-lysyl-[protein] + 3 S-adenosyl-L-homocysteine + 3 H(+). Its function is as follows. Methylates ribosomal protein L11. In Cupriavidus metallidurans (strain ATCC 43123 / DSM 2839 / NBRC 102507 / CH34) (Ralstonia metallidurans), this protein is Ribosomal protein L11 methyltransferase.